The following is a 174-amino-acid chain: Methionine-R-sulfoxide reductase B2, mitochondrial (174 aa).

Residues 1 to 61 (MARLLRALRG…PEQFYVTREK (61 aa)) constitute a mitochondrion transit peptide. The MsrB domain occupies 62 to 172 (GTEAPFSGMY…NSVALKFKPS (111 aa)). Zn(2+)-binding residues include cysteine 82, cysteine 85, cysteine 138, and cysteine 141. Cysteine 161 (nucleophile) is an active-site residue.

Belongs to the MsrB Met sulfoxide reductase family. The cofactor is Zn(2+).

It is found in the mitochondrion. It carries out the reaction L-methionyl-[protein] + [thioredoxin]-disulfide + H2O = L-methionyl-(R)-S-oxide-[protein] + [thioredoxin]-dithiol. The enzyme catalyses [thioredoxin]-disulfide + L-methionine + H2O = L-methionine (R)-S-oxide + [thioredoxin]-dithiol. Its function is as follows. Methionine-sulfoxide reductase that specifically reduces methionine (R)-sulfoxide back to methionine. While in many cases, methionine oxidation is the result of random oxidation following oxidative stress, methionine oxidation is also a post-translational modification that takes place on specific residue. Upon oxidative stress, may play a role in the preservation of mitochondrial integrity by decreasing the intracellular reactive oxygen species build-up through its scavenging role, hence contributing to cell survival and protein maintenance. This chain is Methionine-R-sulfoxide reductase B2, mitochondrial (Msrb2), found in Rattus norvegicus (Rat).